Reading from the N-terminus, the 1498-residue chain is Rap guanine nucleotide exchange factor 2 (1498 aa).

2 disordered regions span residues 40–59 (HVSSSHSGCSITSDSGSSSL) and 68–101 (SEAGDMDLSGLPETAVDSEDDDDEEDIERASDPL). Residues 83 to 94 (VDSEDDDDEEDI) show a composition bias toward acidic residues. Residue 135–252 (AFANMTMSVR…QKVEEEGEIV (118 aa)) participates in a nucleoside 3',5'-cyclic phosphate binding. An N-terminal Ras-GEF domain is found at 267-380 (KGHIVIKGTS…RLLNIACAAK (114 aa)). Residues 385-468 (LMTLTKPSRE…LSITVKTNLF (84 aa)) form the PDZ domain. The residue at position 501 (serine 501) is a Phosphoserine. The region spanning 606-692 (PDQVLRVFKA…GRYYLKNNME (87 aa)) is the Ras-associating domain. Position 644 is a phosphothreonine (threonine 644). The Ras-GEF domain occupies 717–944 (STVEVATQLS…SQGSTNATVL (228 aa)). A phosphoserine mark is found at serine 806, serine 930, serine 933, serine 1022, serine 1079, serine 1088, serine 1094, serine 1115, serine 1119, serine 1158, and serine 1175. The segment at 1002–1048 (PATNTLPKNPGDKKPVKSETSPVAPRAGSQQKAQAQPPPPQPQPQHK) is disordered. The tract at residues 1094 to 1159 (SLERHKKQAE…RSSIVSNSSF (66 aa)) is disordered. Composition is skewed to low complexity over residues 1110-1124 (SSQLSSPPTSPQSSP) and 1140-1159 (SDSGHSEISSRSSIVSNSSF). Disordered regions lie at residues 1224-1257 (STEELSQDQGDRASLDAADSGRGSWTSCSSGSHD), 1304-1371 (TKYN…TKPV), and 1392-1498 (EGRY…VSAV). 2 stretches are compositionally biased toward polar residues: residues 1246–1257 (GSWTSCSSGSHD) and 1306–1330 (YNRQNQSRESLEQAQSRASWASSTG). Residues 1354-1365 (EAESSSVTSVTT) show a composition bias toward low complexity. A compositionally biased stretch (acidic residues) spans 1487 to 1498 (TEEDEDEQVSAV).

This sequence belongs to the RAPGEF2 family. As to quaternary structure, found in a complex, at least composed of KIDINS220, MAGI2, NTRK1 and RAPGEF2; the complex is mainly formed at late endosomes in a neuronal growth factor (NGF)-dependent manner. Interacts (via C-terminal domain) with NEDD4 (via WW domains); this interaction leads to ubiquitination and degradation via the proteasome pathway in a cAMP-independent manner. Interacts with MAGI1 (via PDZ domain). Interacts with ADRB1 (via C-terminal PDZ motif); the interaction is direct. Interacts (via Ras-associating domain) with RAP1A (via GTP-bound active form). Interacts weakly with HRAS (via GDP- and GTP-bound forms). Interacts (via C-terminal domain) with MAGI2 (via PDZ and WW domains). Interacts with CDH1, CTNNB1 and TJP1. Ubiquitinated by NEDD4, leading to proteasomal degradation. Post-translationally, phosphorylation by PLK2 promotes its activity.

The protein localises to the cell junction. The protein resides in the cytoplasm. It localises to the perinuclear region. Its subcellular location is the cell membrane. It is found in the late endosome. Functionally, functions as a guanine nucleotide exchange factor (GEF), which activates Rap and Ras family of small GTPases by exchanging bound GDP for free GTP in a cAMP-dependent manner. Serves as a link between cell surface receptors and Rap/Ras GTPases in intracellular signaling cascades. Also acts as an effector for Rap1 by direct association with Rap1-GTP thereby leading to the amplification of Rap1-mediated signaling. Shows weak activity on HRAS. It is controversial whether RAPGEF2 binds cAMP and cGMP or not. Its binding to ligand-activated beta-1 adrenergic receptor ADRB1 leads to the Ras activation through the G(s)-alpha signaling pathway. Involved in the cAMP-induced Ras and Erk1/2 signaling pathway that leads to sustained inhibition of long term melanogenesis by reducing dendrite extension and melanin synthesis. Also provides inhibitory signals for cell proliferation of melanoma cells and promotes their apoptosis in a cAMP-independent nanner. Regulates cAMP-induced neuritogenesis by mediating the Rap1/B-Raf/ERK signaling through a pathway that is independent on both PKA and RAPGEF3/RAPGEF4. Involved in neuron migration and in the formation of the major forebrain fiber connections forming the corpus callosum, the anterior commissure and the hippocampal commissure during brain development. Involved in neuronal growth factor (NGF)-induced sustained activation of Rap1 at late endosomes and in brain-derived neurotrophic factor (BDNF)-induced axon outgrowth of hippocampal neurons. Plays a role in the regulation of embryonic blood vessel formation and in the establishment of basal junction integrity and endothelial barrier function. May be involved in the regulation of the vascular endothelial growth factor receptor KDR and cadherin CDH5 expression at allantois endothelial cell-cell junctions. The sequence is that of Rap guanine nucleotide exchange factor 2 (RAPGEF2) from Canis lupus familiaris (Dog).